Here is a 312-residue protein sequence, read N- to C-terminus: MRLANQTLGGDFFLLGIFSQISHPGRLCLLIFSIFLMAVSWNITLILLIHIDSSLHTPMYFFINQLSLIDLTYISVTVPKMLVNQLAKDKTISVLGCGTQMYFYLQLGGAECCLLAAMAYDRYVAICHPLRYSVLMSHRVCLLLASGCWFVGSVDGFMLTPIAMSFPFCRSHEIQHFFCEVPAVLKLSCSDTSLYKIFMYLCCVIMLLIPVTVISVSYYYIILTIHKMNSVEGRKKAFTTCSSHITVVSLFYGAAIYNYMLPSSYQTPEKDMMSSFFYTILTPVLNPIIYSFRNKDVTRALKKMLSVQKPPY.

The Extracellular segment spans residues Met1–Gly25. A glycan (N-linked (GlcNAc...) asparagine) is linked at Asn5. Residues Arg26–Ile49 form a helical membrane-spanning segment. Residues His50–Thr57 are Cytoplasmic-facing. A helical transmembrane segment spans residues Pro58–Pro79. Over Lys80–Gln100 the chain is Extracellular. Residues Cys97 and Cys189 are joined by a disulfide bond. A helical membrane pass occupies residues Met101–Tyr120. Residues Asp121 to Arg139 are Cytoplasmic-facing. A helical membrane pass occupies residues Val140–Met158. Residues Leu159–Tyr195 are Extracellular-facing. A helical membrane pass occupies residues Lys196–Tyr219. Over Tyr220–Lys236 the chain is Cytoplasmic. The chain crosses the membrane as a helical span at residues Ala237–Tyr259. The Extracellular segment spans residues Met260–Met272. A helical membrane pass occupies residues Met273 to Phe292. Residues Arg293–Tyr312 are Cytoplasmic-facing.

It belongs to the G-protein coupled receptor 1 family.

It is found in the cell membrane. Functionally, odorant receptor. The sequence is that of Olfactory receptor 2T10 (OR2T10) from Homo sapiens (Human).